We begin with the raw amino-acid sequence, 685 residues long: Bifunctional diguanylate cyclase/cyclic di-GMP phosphodiesterase MucR (685 aa).

One can recognise an MHYT domain in the interval Tyr-6–Pro-199. 7 helical membrane passes run Val-9–Ala-29, Leu-44–Leu-64, Gly-77–Val-97, Gly-117–Tyr-137, Trp-141–Phe-161, Ala-175–Ala-195, and Gly-214–Val-234. The Cytoplasmic segment spans residues Ser-235–Ala-685. One can recognise a GGDEF domain in the interval Arg-293 to Ser-425. The region spanning Gln-434–Ala-685 is the EAL domain. The 3',3'-c-di-GMP site is built by Gln-455, Glu-469, Leu-472, Arg-473, Asn-528, and Gln-533. Glu-469 lines the Mg(2+) pocket. A Mg(2+)-binding site is contributed by Asn-528. 3 residues coordinate Mg(2+): Glu-560, Asp-590, and Asp-591. A 3',3'-c-di-GMP-binding site is contributed by Asp-590. Arg-614 contributes to the 3',3'-c-di-GMP binding site. Residue Glu-647 participates in Mg(2+) binding. 3',3'-c-di-GMP-binding residues include Glu-650 and Phe-669.

As to quaternary structure, homodimer. Requires Mg(2+) as cofactor.

It is found in the cell inner membrane. It carries out the reaction 2 GTP = 3',3'-c-di-GMP + 2 diphosphate. The enzyme catalyses 3',3'-c-di-GMP + H2O = 5'-phosphoguanylyl(3'-&gt;5')guanosine + H(+). Displays both diguanylate cyclase (DGC) and c-di-GMP-specific phosphodiesterase (PDE) activity. Probably modulates DGC and PDE activities, and thus c-di-GMP levels, in a growth mode-dependent manner. May act as a PDE under planktonic growth conditions and as a DGC in biofilms. During biofilm formation, it specifically activates alginate biosynthesis via generation of a localized c-di-GMP pool in the vicinity of the alginate biosynthesis protein Alg44. In Pseudomonas aeruginosa (strain ATCC 15692 / DSM 22644 / CIP 104116 / JCM 14847 / LMG 12228 / 1C / PRS 101 / PAO1), this protein is Bifunctional diguanylate cyclase/cyclic di-GMP phosphodiesterase MucR.